A 687-amino-acid chain; its full sequence is T-box transcription factor TBX2b (687 aa).

A DNA-binding region (T-box) is located at residues 103–276; that stretch reads LWDQFHKLGT…NNPFAKGFRD (174 aa). Disordered regions lie at residues 303–452 and 611–687; these read DRDG…ESPS and NLLT…DSPK. Composition is skewed to basic and acidic residues over residues 338-357, 375-400, and 408-430; these read GSRD…HQND, SRSE…RKTS, and NLEK…KDTE. Polar residues-rich tracts occupy residues 431–451, 611–630, and 644–654; these read NSGI…TESP, NLLT…SSKC, and GASQRNGSPKT. Positions 654-681 form a coiled coil; it reads TTMKESINELQNIQRLVSGLESQRETSS. The span at 675 to 687 shows a compositional bias: basic and acidic residues; that stretch reads SQRETSSPRDSPK.

As to quaternary structure, binds DNA as a monomer. In terms of tissue distribution, expressed in the axial mesoderm, notably, in the notochordal precursor cells immediately before formation of the notochord and in the chordoneural hinge of the tail bud, after the notochord is formed. In addition, its expression is detected in the ventral forebrain, sensory neurons, fin buds and excretory system.

The protein resides in the nucleus. Its function is as follows. Transcription factor which acts as a transcriptional repressor. May also function as a transcriptional activator. Binds to the palindromic T site 5'-TTCACACCTAGGTGTGAA-3' DNA sequence, or a half-site, which are present in the regulatory region of several genes. Involved in the transcriptional regulation of genes required for mesoderm differentiation. Plays a role in the specification of late notochordal precursor cells and formation of the differentiated notochord. Required for cardiac atrioventricular canal formation. This Danio rerio (Zebrafish) protein is T-box transcription factor TBX2b (tbx2b).